The primary structure comprises 2883 residues: Desmoplakin (2883 aa).

A disordered region spans residues 1–21 (MSCNGGSHPRINTLGRMTRAE). The tract at residues 1–596 (MSCNGGSHPR…DYMKTIEDLE (596 aa)) is interaction with PKP1, JUP, PKP2. The globular 1 stretch occupies residues 1–1068 (MSCNGGSHPR…ANSENCNKNK (1068 aa)). A Phosphoserine modification is found at Ser-22. Residue Thr-59 is modified to Phosphothreonine. Ser-65 is subject to Phosphoserine. Tyr-68 carries the phosphotyrosine modification. Thr-73 is modified (phosphothreonine). A phosphoserine mark is found at Ser-177, Ser-178, and Ser-188. Spectrin repeat units follow at residues 190–283 (SGWD…HLRQ) and 284–387 (LQNI…LKEN). One copy of the Spectrin 3a repeat lies at 388–458 (AAYFQFFEEA…NLVNKSKKIV (71 aa)). One can recognise an SH3 domain in the interval 470 to 527 (NKPIILRALCDYKQDQKIVHKGDECILKDNNERSKWYVTGPGGVDMLVPSVGLIIPPP). Residues 528–557 (NPLAVDLSCKIEQYYEAILALWNQLYINMK) form a Spectrin 3b repeat. Spectrin repeat units follow at residues 558–639 (SLVS…IQLP), 666–781 (VIET…SLCS), and 782–895 (VRAL…DLEK). Positions 1034 to 1956 (KSLEDLKLKN…LQKEIEKLRQ (923 aa)) form a coiled coil. Residues 1069-1957 (FLDQNLQKYQ…QKEIEKLRQR (889 aa)) are central fibrous rod domain. A phosphoserine mark is found at Ser-1670, Ser-1720, and Ser-2036. Residues 1958–2882 (PYGSHRETQT…YSFSSSSIGG (925 aa)) form a globular 2 region. Residues 1972 to 2220 (TVDSSKLVFD…LLLSVQKRSM (249 aa)) are 4.5 X 38 AA tandem repeats (Domain A). Plectin repeat units follow at residues 2021-2057 (QPFL…PEST), 2058-2095 (VMLL…FDDR), 2096-2133 (QQIY…RETG), 2134-2171 (MRLL…RDLY), 2175-2209 (NDPR…PHTG), 2210-2245 (LLLL…PSTV), 2263-2300 (KDFL…PGTA), 2301-2338 (LELL…IEFK), 2339-2376 (EKLL…KGHG), 2377-2414 (IRLL…EELS), 2418-2452 (SDPS…EETG), 2468-2505 (SQKN…YDTF), 2519-2556 (TITG…RKFF), 2622-2659 (SDPL…SITG), 2660-2697 (QRLL…QDMA), 2736-2773 (QRFL…GRAA), and 2774-2811 (QRLQ…DITG). Phosphoserine occurs at positions 2219, 2221, and 2237. The tract at residues 2256 to 2458 (DEVGERIKDF…EETGLCLLPL (203 aa)) is 4.5 X 38 AA tandem repeats (Domain B). Gln-2492 carries the Omega-hydroxyceramide glutamate ester lipid modification. A 4.5 X 38 AA tandem repeats (Domain C) region spans residues 2621–2833 (LSDPLEESSP…GLPSPYNMSA (213 aa)). Phosphoserine is present on residues Ser-2822 and Ser-2827. The disordered stretch occupies residues 2822–2883 (SKGLPSPYNM…SFSSSSIGGY (62 aa)). Position 2829 is a phosphotyrosine (Tyr-2829). Phosphoserine is present on residues Ser-2832 and Ser-2836. The 6 X 4 AA tandem repeats of G-S-R-[SR] stretch occupies residues 2835–2858 (GSRSGSRSGSRSGSRSGSRSGSRR). Residues 2835–2858 (GSRSGSRSGSRSGSRSGSRSGSRR) are compositionally biased toward low complexity. An omega-N-methylarginine mark is found at Arg-2837 and Arg-2858. The residue at position 2860 (Ser-2860) is a Phosphoserine. A Phosphothreonine modification is found at Thr-2864. Residues 2867–2883 (SSYSYSYSFSSSSIGGY) are compositionally biased toward low complexity. A Phosphoserine modification is found at Ser-2879.

Belongs to the plakin or cytolinker family. In terms of assembly, homodimer. Interacts with COL17A1 (via cytoplasmic region). Interacts with DSC2. Interacts with PKP1. Interacts with PKP2. Interacts weakly with TMEM65. In terms of processing, phosphorylation at Ser-2860 increases association with intermediate filament cytokeratin, potentially facilitating interaction between desmosome junctions and intermediate filament architecture. As to expression, expressed in undifferentiated keratinocytes of the epidermis at birth, expression increases as differentiation proceeds (at protein level). Abundantly expressed in the suprabasal layers and weakly in the basal layers of the outer hair root sheath (at protein level). Expressed at intercalated disks in cardiomyocytes (at protein level).

It localises to the cell junction. The protein resides in the desmosome. The protein localises to the cell membrane. Its subcellular location is the cytoplasm. Major high molecular weight protein of desmosomes. Regulates profibrotic gene expression in cardiomyocytes via activation of the MAPK14/p38 MAPK signaling cascade and increase in TGFB1 protein abundance. In Mus musculus (Mouse), this protein is Desmoplakin.